The following is a 96-amino-acid chain: RING finger protein Z (96 aa).

The span at 1 to 10 shows a compositional bias: basic and acidic residues; it reads MGNCRSKQES. Positions 1–21 are disordered; that stretch reads MGNCRSKQESHPICPNTQTPE. Gly2 is lipidated: N-myristoyl glycine; by host. The segment at 41 to 77 adopts an RING-type; atypical zinc-finger fold; that stretch reads CKCCWFADRNLINCSDHYLCLRCLNVMLRTSNLCNIC. The short motif at 91 to 94 is the PTAP/PSAP motif element; the sequence is PTAP.

Belongs to the arenaviridae Z protein family. Interacts with protein NP; this interaction probably directs the encapsidated genome to budding sites. Interacts (via RING domain) with polymerase L; this interaction inhibits viral transcription and replication, Z partially blocks the product exit tunnel for the releasing nascent RNA product. Interacts with the glycoprotein complex; this interaction plays a role in virion budding. Interacts with host eIF4E; this interaction results in eIF4E reduced affinity for its substrate, the 5'-m7 G cap structure. Interacts (via late-budding domain) with host TSG101; this interaction is essential for budding and release of viral particles. Interacts with host RPLP0; this interaction may serve to load ribosome-like particles inside the virion. Interacts with host PML; this interaction induces PML bodies redistribution in the cytoplasm upon viral infection. Post-translationally, myristoylation is required for the role of RING finger protein Z in assembly and budding.

It localises to the virion. It is found in the host cytoplasm. The protein localises to the host perinuclear region. Its subcellular location is the host cell membrane. Its function is as follows. Plays a crucial role in virion assembly and budding. Expressed late in the virus life cycle, it acts as an inhibitor of viral transcription and RNA synthesis by interacting with the viral polymerase L. Presumably recruits the NP encapsidated genome to cellular membranes at budding sites via direct interaction with NP. Plays critical roles in the final steps of viral release by interacting with host TSG101, a member of the vacuolar protein-sorting pathway and using other cellular host proteins involved in vesicle formation pathway. The budding of the virus progeny occurs after association of protein Z with the viral glycoprotein complex SSP-GP1-GP2 at the cell periphery, step that requires myristoylation of protein Z. Also selectively represses protein production by associating with host eIF4E. In cell-based minigenome assay, has an inhibitory effect on the ribonucleoprotein machinery (vRNP), which is responsible for the replication and transcription of the viral genome. This Hylaeamys megacephalus (Large-headed rice rat) protein is RING finger protein Z.